The primary structure comprises 277 residues: Sulfur carrier protein FdhD (277 aa).

Catalysis depends on cysteine 123, which acts as the Cysteine persulfide intermediate.

The protein belongs to the FdhD family.

The protein localises to the cytoplasm. Its function is as follows. Required for formate dehydrogenase (FDH) activity. Acts as a sulfur carrier protein that transfers sulfur from IscS to the molybdenum cofactor prior to its insertion into FDH. The polypeptide is Sulfur carrier protein FdhD (Pectobacterium atrosepticum (strain SCRI 1043 / ATCC BAA-672) (Erwinia carotovora subsp. atroseptica)).